We begin with the raw amino-acid sequence, 88 residues long: Large ribosomal subunit protein bL27 (88 aa).

The disordered stretch occupies residues M1–K24.

Belongs to the bacterial ribosomal protein bL27 family.

This is Large ribosomal subunit protein bL27 from Synechococcus sp. (strain CC9311).